Reading from the N-terminus, the 163-residue chain is Phosphopantetheine adenylyltransferase (163 aa).

A substrate-binding site is contributed by Thr10. Residues 10-11 (TF) and His18 each bind ATP. Substrate-binding residues include Lys42, Leu74, and Arg88. Residues 89–91 (GLR), Glu99, and 124–130 (NSFISST) each bind ATP.

This sequence belongs to the bacterial CoaD family. In terms of assembly, homohexamer. Requires Mg(2+) as cofactor.

It is found in the cytoplasm. It carries out the reaction (R)-4'-phosphopantetheine + ATP + H(+) = 3'-dephospho-CoA + diphosphate. Its pathway is cofactor biosynthesis; coenzyme A biosynthesis; CoA from (R)-pantothenate: step 4/5. Reversibly transfers an adenylyl group from ATP to 4'-phosphopantetheine, yielding dephospho-CoA (dPCoA) and pyrophosphate. The protein is Phosphopantetheine adenylyltransferase of Shewanella oneidensis (strain ATCC 700550 / JCM 31522 / CIP 106686 / LMG 19005 / NCIMB 14063 / MR-1).